The sequence spans 161 residues: Nucleotide-binding protein Ajs_2750 (161 aa).

It belongs to the YajQ family.

In terms of biological role, nucleotide-binding protein. This chain is Nucleotide-binding protein Ajs_2750, found in Acidovorax sp. (strain JS42).